Reading from the N-terminus, the 514-residue chain is MKFKLLLAGSLVAVGAMALLASNINEKEKQRVELAKAPSEAGIAGKEKSEEWAKYYPRQFDSWKKTKEYDSFTDMLAKDPALVIAWSGYAFSKDYNSPRGHYYALQDNVNSLRTGAPVDAKTGPLPTACWTCKSPDVPRLIEEDGELEYFTGKWAKYGSQIVNVIGCANCHDDKTAELKVRVPHLNRGLQAAGLKTFEESTHQDKRTLVCAQCHVEYYFKKTEWKDAKGADKTAMVVTLPWANGVGKDGNAGVEGMIKYYDEINFSDWTHNISKTPMLKAQHPGFEFWKSGIHGQKGVSCADCHMPYTQEGSVKYSDHQVKENPLDSMDQSCMNCHRESESKLRGIVHQKYERKEFLNKVAFDNIGKAHLETGKAIEAGASDEELKEVRKLIRHGQFKADMAIAAHGNYFHAPEETLRLLAAGSDDAQKARLLLVKILAKHGVMDYIAPDFDTKDKAQKLAKVDIAALAAEKMKFKQTLEQEWKKEAKAKGRANPELYKDVDTINDGKSSWNKK.

An N-terminal signal peptide occupies residues 1–21; it reads MKFKLLLAGSLVAVGAMALLA. The heme c site is built by histidine 101, cysteine 129, cysteine 132, lysine 133, cysteine 167, cysteine 170, histidine 171, cysteine 210, cysteine 213, and histidine 214. Ca(2+) is bound by residues glutamate 216, tyrosine 217, lysine 279, and glutamine 281. Tyrosine 217 is a substrate binding site. Histidine 282 lines the substrate pocket. Residues histidine 293, cysteine 300, cysteine 303, histidine 304, histidine 318, cysteine 332, cysteine 335, histidine 336, and histidine 411 each coordinate heme c.

Belongs to the cytochrome c-552 family. As to quaternary structure, homodimer. Probably also exists as a membrane-associated heterooligomeric complex. Ca(2+) serves as cofactor. Heme c is required as a cofactor.

The protein localises to the periplasm. The catalysed reaction is 6 Fe(III)-[cytochrome c] + NH4(+) + 2 H2O = 6 Fe(II)-[cytochrome c] + nitrite + 8 H(+). Its pathway is nitrogen metabolism; nitrate reduction (assimilation). Functionally, catalyzes the reduction of nitrite to ammonia, consuming six electrons in the process. Has very low activity toward hydroxylamine, and even lower activity toward sulfite. Sulfite reductase activity is maximal at neutral pH. This is Cytochrome c-552 (nrfA) from Sulfurospirillum deleyianum.